Consider the following 429-residue polypeptide: Septin-11 (429 aa).

Residue Ala-2 is modified to N-acetylalanine. Ser-9 carries the phosphoserine modification. Residues 38–304 (QGFCFNILCV…ELYRRCKLEE (267 aa)) form the Septin-type G domain. The interval 48-55 (GETGIGKS) is G1 motif. Residues 48–55 (GETGIGKS), Gly-103, 184–192 (KADTIAKNE), Gly-238, and Arg-253 each bind GTP. Residues 100–103 (DTVG) are G3 motif. Positions 183–186 (AKAD) are G4 motif. Residues 320–415 (QETYEAKRNE…QSQAQQSGAQ (96 aa)) are a coiled coil. Residues 398–429 (KKAAAQLLQSQAQQSGAQQTKKDKDKKNASFT) form a disordered region. The span at 401–416 (AAQLLQSQAQQSGAQQ) shows a compositional bias: low complexity. The segment covering 417–429 (TKKDKDKKNASFT) has biased composition (basic and acidic residues).

The protein belongs to the TRAFAC class TrmE-Era-EngA-EngB-Septin-like GTPase superfamily. Septin GTPase family. As to quaternary structure, septins polymerize into heterooligomeric protein complexes that form filaments, and can associate with cellular membranes, actin filaments and microtubules. Forms homooligomers. GTPase activity is required for filament formation. Interacts with SEPTIN7, SEPTIN9 and SEPTIN12. Widely expressed, except in leukocytes.

It localises to the cytoplasm. The protein localises to the cytoskeleton. Its subcellular location is the synapse. The protein resides in the cell projection. It is found in the dendritic spine. It localises to the axon. Its function is as follows. Filament-forming cytoskeletal GTPase. May play a role in cytokinesis (Potential). May play a role in the cytoarchitecture of neurons, including dendritic arborization and dendritic spines, and in GABAergic synaptic connectivity. During Listeria monocytogenes infection, not required for the bacterial entry process, but restricts its efficacy. The polypeptide is Septin-11 (Homo sapiens (Human)).